A 1331-amino-acid chain; its full sequence is Alpha,alpha-trehalose-phosphate synthase [UDP-forming] 1 (1331 aa).

Polar residues predominate over residues 1-13 (MTDTATGVHSNAN). 3 disordered regions span residues 1-50 (MTDT…DNDP), 71-118 (TGKE…SGQL), and 1312-1331 (PMDQ…SFGN). The segment covering 39 to 50 (DPFDRPKNDNDP) has biased composition (basic and acidic residues). Residues 77–98 (LDESDDMTENEDHDEMANEDDG) are compositionally biased toward acidic residues. The segment covering 102 to 112 (NEKKVETRKMD) has biased composition (basic and acidic residues). Polar residues predominate over residues 1318–1331 (SSTLGASLGTSFGN).

In the N-terminal section; belongs to the glycosyltransferase 20 family. This sequence in the C-terminal section; belongs to the gob-1 trehalose phosphatase family.

The catalysed reaction is D-glucose 6-phosphate + UDP-alpha-D-glucose = alpha,alpha-trehalose 6-phosphate + UDP + H(+). Its function is as follows. Catalyzes the production of trehalose from glucose-6-phosphate and UDP-alpha-D-glucose in a 2 step process. The polypeptide is Alpha,alpha-trehalose-phosphate synthase [UDP-forming] 1 (tps-1) (Caenorhabditis elegans).